A 586-amino-acid chain; its full sequence is CTP synthase 2 (586 aa).

The region spanning 300 to 554 is the Glutamine amidotransferase type-1 domain; that stretch reads SIALVGKYTK…LAATGNLNAY (255 aa). Catalysis depends on for GATase activity residues Cys399, His526, and Glu528. Residues 563–586 are disordered; sequence SSDRYSDASDDSFSEPRIAELEIS. Phosphoserine is present on residues Ser568, Ser571, and Ser574.

Belongs to the CTP synthase family.

It catalyses the reaction UTP + L-glutamine + ATP + H2O = CTP + L-glutamate + ADP + phosphate + 2 H(+). It functions in the pathway pyrimidine metabolism; CTP biosynthesis via de novo pathway; CTP from UDP: step 2/2. In terms of biological role, catalyzes the ATP-dependent amination of UTP to CTP with either L-glutamine or ammonia as the source of nitrogen. Constitutes the rate-limiting enzyme in the synthesis of cytosine nucleotides. This is CTP synthase 2 (CTPS2) from Homo sapiens (Human).